We begin with the raw amino-acid sequence, 113 residues long: Putative pterin-4-alpha-carbinolamine dehydratase (113 aa).

It belongs to the pterin-4-alpha-carbinolamine dehydratase family.

The enzyme catalyses (4aS,6R)-4a-hydroxy-L-erythro-5,6,7,8-tetrahydrobiopterin = (6R)-L-erythro-6,7-dihydrobiopterin + H2O. This is Putative pterin-4-alpha-carbinolamine dehydratase from Saccharophagus degradans (strain 2-40 / ATCC 43961 / DSM 17024).